The sequence spans 403 residues: Histidine--tRNA ligase (403 aa).

This sequence belongs to the class-II aminoacyl-tRNA synthetase family. Homodimer.

It localises to the cytoplasm. It catalyses the reaction tRNA(His) + L-histidine + ATP = L-histidyl-tRNA(His) + AMP + diphosphate + H(+). The sequence is that of Histidine--tRNA ligase from Sulfurimonas denitrificans (strain ATCC 33889 / DSM 1251) (Thiomicrospira denitrificans (strain ATCC 33889 / DSM 1251)).